Here is a 361-residue protein sequence, read N- to C-terminus: Monodechloroaminopyrrolnitrin synthase PrnB (361 aa).

Residue P222–V225 participates in substrate binding. Position 313 (H313) interacts with heme. The substrate site is built by Y321 and S332.

It belongs to the PrnB family. Monomer. Requires heme b as cofactor.

It catalyses the reaction 7-chloro-L-tryptophan + AH2 + O2 = monodechloroaminopyrrolnitrin + A + CO2 + 2 H2O. It functions in the pathway antibiotic biosynthesis. Functionally, involved in the biosynthesis of the antifungal antibiotic pyrrolnitrin. Catalyzes the ring rearrangement and decarboxylation to convert 7-chloro-L-tryptophan (7-CLT) to monodechloroaminopyrrolnitrin (MDA). It can also use 7-chloro-D-tryptophan, but 7-chloro-L-tryptophan is the preferred natural enantiomer. This Pseudomonas fluorescens protein is Monodechloroaminopyrrolnitrin synthase PrnB (prnB).